The primary structure comprises 319 residues: Ribonucleoside-diphosphate reductase small chain (319 aa).

Fe cation is bound by residues Asp70, Glu101, and His104. Residue Tyr108 is part of the active site. 3 residues coordinate Fe cation: Glu163, Glu197, and His200. Residues 313–319 (FSLDVDF) form an interaction with R1 region.

It belongs to the ribonucleoside diphosphate reductase small chain family. As to quaternary structure, interacts with RNR1/OPG080 subunit. Can interact with host RNR1 supunit. Fe cation serves as cofactor.

It carries out the reaction a 2'-deoxyribonucleoside 5'-diphosphate + [thioredoxin]-disulfide + H2O = a ribonucleoside 5'-diphosphate + [thioredoxin]-dithiol. In terms of biological role, ribonucleoside-diphosphate reductase holoenzyme provides the precursors necessary for viral DNA synthesis. Allows virus growth in non-dividing cells. Catalyzes the biosynthesis of deoxyribonucleotides from the corresponding ribonucleotides. The chain is Ribonucleoside-diphosphate reductase small chain (OPG048) from Vaccinia virus (strain Copenhagen) (VACV).